A 970-amino-acid chain; its full sequence is Phosphoenolpyruvate carboxylase 1 (970 aa).

Residue serine 15 is modified to Phosphoserine. Residues histidine 177, lysine 606, and arginine 647 contribute to the active site.

It belongs to the PEPCase type 1 family. Homotetramer. The cofactor is Mg(2+).

Its subcellular location is the cytoplasm. The enzyme catalyses oxaloacetate + phosphate = phosphoenolpyruvate + hydrogencarbonate. It participates in photosynthesis; C4 acid pathway. Its activity is regulated as follows. By light-reversible phosphorylation. In terms of biological role, through the carboxylation of phosphoenolpyruvate (PEP) it forms oxaloacetate, a four-carbon dicarboxylic acid source for the tricarboxylic acid cycle. The chain is Phosphoenolpyruvate carboxylase 1 (PEP1) from Zea mays (Maize).